The sequence spans 770 residues: Cyclopiane-type diterpene synthase (770 aa).

A terpene cyclase region spans residues 5–335 (ITDEYAVGID…VPRYCKVDRN (331 aa)). Mg(2+)-binding residues include aspartate 97 and aspartate 101. Substrate contacts are provided by residues aspartate 97, aspartate 101, 190–193 (RIVD), asparagine 234, 238–242 (SWDKE), and 328–329 (RY). Residues 97-101 (DDETD) carry the DDXXD 1 motif. Residues 234-242 (NDLFSWDKE) carry the NSE/DTE motif. Residues 336 to 720 (PYKDHLEKYG…WALRLLIMKL (385 aa)) are prenyltransferase. Residues 371 to 397 (NQLKEPSSSTYKTHFSPLEPNPGPEQT) are disordered. Polar residues predominate over residues 374–383 (KEPSSSTYKT). Isopentenyl diphosphate-binding residues include lysine 423, arginine 426, and histidine 455. Mg(2+) is bound by residues aspartate 462 and aspartate 466. The DDXXD 2 motif lies at 462–466 (DDIQD). Position 471 (arginine 471) interacts with dimethylallyl diphosphate. Arginine 472 is an isopentenyl diphosphate binding site. Residues lysine 548, threonine 549, glutamine 584, asparagine 591, lysine 620, and lysine 630 each contribute to the dimethylallyl diphosphate site.

This sequence in the N-terminal section; belongs to the terpene synthase family. In the C-terminal section; belongs to the FPP/GGPP synthase family. In terms of assembly, hexamer. Mg(2+) serves as cofactor.

The catalysed reaction is isopentenyl diphosphate + (2E,6E)-farnesyl diphosphate = (2E,6E,10E)-geranylgeranyl diphosphate + diphosphate. The enzyme catalyses (2E,6E,10E)-geranylgeranyl diphosphate + H2O = (+)-penichrysol + diphosphate. The protein operates within secondary metabolite biosynthesis; terpenoid biosynthesis. In terms of biological role, bifunctional terpene synthase converts dimethylallyl diphosphate (DMAPP) and isopentenyl diphosphate (IPP) into a cyclopiane-type diterpene. The C-terminal prenyltransferase (PT) domain of PcCS catalyzes formation of geranylgeranyl pyrophosphate (GGPP), whereas the N-terminal terpene cyclase (TC) domain catalyzes the cyclization of GGPP to the cyclopiane-type diterpene penichrysol. This chain is Cyclopiane-type diterpene synthase, found in Penicillium chrysogenum (Penicillium notatum).